The chain runs to 173 residues: Putative metal-dependent hydrolase BA_2700/GBAA_2700/BAS2515 (173 aa).

Residues H65, H156, and H160 each coordinate Zn(2+).

Belongs to the metal hydrolase YfiT family. As to quaternary structure, homodimer. Requires Zn(2+) as cofactor.

It is found in the cytoplasm. In terms of biological role, possible metal-dependent hydrolase. The protein is Putative metal-dependent hydrolase BA_2700/GBAA_2700/BAS2515 of Bacillus anthracis.